Reading from the N-terminus, the 243-residue chain is Dirigent protein 16 (243 aa).

A signal peptide spans 1–24 (MMIKQSPFLLLTTILFTVAVFVAA).

It belongs to the plant dirigent protein family. As to quaternary structure, homodimer.

The protein localises to the secreted. It localises to the extracellular space. The protein resides in the apoplast. Its function is as follows. Dirigent proteins impart stereoselectivity on the phenoxy radical-coupling reaction, yielding optically active lignans from two molecules of coniferyl alcohol in the biosynthesis of lignans, flavonolignans, and alkaloids and thus plays a central role in plant secondary metabolism. The protein is Dirigent protein 16 (DIR16) of Arabidopsis thaliana (Mouse-ear cress).